Reading from the N-terminus, the 619-residue chain is Probable Xaa-Pro aminopeptidase P (619 aa).

Mn(2+) contacts are provided by Asp416, Asp427, Glu525, and Glu539.

The protein belongs to the peptidase M24B family. It depends on Mn(2+) as a cofactor.

The catalysed reaction is Release of any N-terminal amino acid, including proline, that is linked to proline, even from a dipeptide or tripeptide.. Its function is as follows. Catalyzes the removal of a penultimate prolyl residue from the N-termini of peptides. This chain is Probable Xaa-Pro aminopeptidase P (AMPP), found in Tuber melanosporum (strain Mel28) (Perigord black truffle).